The sequence spans 877 residues: Probable Ras GTPase-activating-like protein ngap (877 aa).

Residues 72 to 218 enclose the C2 domain; that stretch reads TPSATYESLI…KDQKERELWF (147 aa). The interval 350–456 is disordered; sequence SDDGDISGLK…ETINLSSSIN (107 aa). The span at 389–409 shows a compositional bias: low complexity; the sequence is TTATTTPSSTPSTPISPSSQS. Residues 410 to 425 are compositionally biased toward polar residues; the sequence is NNIKTPDSKTRSSSNA. Composition is skewed to low complexity over residues 426 to 438 and 447 to 456; these read STNTPQTTPKSTG and ETINLSSSIN. In terms of domain architecture, Ras-GAP spans 591–802; it reads GKCLYLLKSL…ENMKSFINTL (212 aa). Residues 820 to 848 adopt a coiled-coil conformation; the sequence is LEKELACLYRHLIKQRQDMAEEMESTESE.

May function as a Ras GTPase-activating protein. This Dictyostelium discoideum (Social amoeba) protein is Probable Ras GTPase-activating-like protein ngap (ngap).